Consider the following 971-residue polypeptide: MLRLSLPPNVSMGFRLVTLVALLFTHVDHITADTEAETGGNETTECTGSYYCKKGVILPIWEPQDPSFGDKIARATVYFVAMVYMFLGVSIIADRFMSSIEVITSQEKEITIKKPNGETTKTTVRIWNETVSNLTLMALGSSAPEILLSVIEVCGHNFTAGDLGPSTIVGSAAFNMFIIIALCVYVVPDGETRKIKHLRVFFVTAAWSIFAYTWLYIILSVSSPGVVEVWEGLLTFFFFPICVVFAWVADRRLLFYKYVYKRYRAGKQRGMIIEHEGDRPASKTEIEMDGKVVNSHVDNFLDGALVLEVDERDQDDEEARREMARILKELKQKHPDKEIEQLIELANYQVLSQQQKSRAFYRIQATRLMTGAGNILKRHAADQARKAVSMHEVNMDVVENDPVSKVFFEQGTYQCLENCGTVALTIIRRGGDLTNTVFVDFRTEDGTANAGSDYEFTEGTVIFKPGETQKEIRVGIIDDDIFEEDENFLVHLSNVRVSSEVSEDGILDSNHVSAIACLGSPNTATITIFDDDHAGIFTFEEPVTHVSESIGIMEVKVLRTSGARGNVIIPYKTIEGTARGGGEDFEDTCGELEFQNDEIVKTISVKVIDDEEYEKNKTFFIEIGEPRLVEMSEKKALLLNELGGFTLTEGKKMYGQPVFRKVHARDHPIPSTVISISEEYDDKQPLTSKEEEERRIAEMGRPILGEHTKLEVIIEESYEFKSTVDKLIKKTNLALVVGTNSWREQFIEAITVSAGEDDDDDECGEEKLPSCFDYVMHFLTVFWKVLFAFVPPTEYWNGWACFIVSILMIGLLTAFIGDLASHFGCTIGLKDSVTAVVFVALGTSVPDTFASKVAATQDQYADASIGNVTGSNAVNVFLGIGVAWSIAAIYHAANGEQFKVSPGTLAFSVTLFTIFAFINVGVLLYRRRPEIGGELGGPRTAKLLTSSLFVLLWLLYIFFSSLEAYCHIKGF.

The signal sequence occupies residues 1-32; that stretch reads MLRLSLPPNVSMGFRLVTLVALLFTHVDHITA. Residues 33-71 are Extracellular-facing; the sequence is DTEAETGGNETTECTGSYYCKKGVILPIWEPQDPSFGDK. Asn41 is a glycosylation site (N-linked (GlcNAc...) asparagine). Residues 72-92 form a helical membrane-spanning segment; the sequence is IARATVYFVAMVYMFLGVSII. Topologically, residues 93 to 133 are cytoplasmic; that stretch reads ADRFMSSIEVITSQEKEITIKKPNGETTKTTVRIWNETVSN. The chain crosses the membrane as a helical span at residues 134-154; sequence LTLMALGSSAPEILLSVIEVC. An Alpha-1 repeat occupies 138-178; the sequence is ALGSSAPEILLSVIEVCGHNFTAGDLGPSTIVGSAAFNMFI. Over 155–167 the chain is Extracellular; sequence GHNFTAGDLGPST. Residue Asn157 is glycosylated (N-linked (GlcNAc...) asparagine). Residues 168–188 form a helical membrane-spanning segment; sequence IVGSAAFNMFIIIALCVYVVP. Residues 189–201 lie on the Cytoplasmic side of the membrane; the sequence is DGETRKIKHLRVF. Residues 202-222 form a helical membrane-spanning segment; that stretch reads FVTAAWSIFAYTWLYIILSVS. Residues 223–228 are Extracellular-facing; the sequence is SPGVVE. The helical transmembrane segment at 229–249 threads the bilayer; it reads VWEGLLTFFFFPICVVFAWVA. Residues 250-798 lie on the Cytoplasmic side of the membrane; that stretch reads DRRLLFYKYV…FVPPTEYWNG (549 aa). Positions 251–270 are putative calmodulin-binding region; sequence RRLLFYKYVYKRYRAGKQRG. Phosphoserine occurs at positions 282 and 389. Calx-beta domains lie at 393–493 and 524–624; these read VNMD…VHLS and ATIT…IEIG. The Ca(2+) site is built by Glu417, Asp453, Asp478, Asp479, Ile481, Glu483, Glu486, Asp530, Asp531, Asp532, Glu548, Asp584, Asp610, Glu611, Glu612, and Glu716. A helical transmembrane segment spans residues 799–819; sequence WACFIVSILMIGLLTAFIGDL. At 820–822 the chain is on the extracellular side; that stretch reads ASH. A helical transmembrane segment spans residues 823–843; that stretch reads FGCTIGLKDSVTAVVFVALGT. One copy of the Alpha-2 repeat lies at 840-876; that stretch reads ALGTSVPDTFASKVAATQDQYADASIGNVTGSNAVNV. Residues 844-872 are Cytoplasmic-facing; that stretch reads SVPDTFASKVAATQDQYADASIGNVTGSN. The chain crosses the membrane as a helical span at residues 873-893; the sequence is AVNVFLGIGVAWSIAAIYHAA. Topologically, residues 894 to 904 are extracellular; it reads NGEQFKVSPGT. The chain crosses the membrane as a helical span at residues 905–925; sequence LAFSVTLFTIFAFINVGVLLY. Residues 926–942 lie on the Cytoplasmic side of the membrane; sequence RRRPEIGGELGGPRTAK. A helical membrane pass occupies residues 943 to 963; that stretch reads LLTSSLFVLLWLLYIFFSSLE. Over 964 to 971 the chain is Extracellular; the sequence is AYCHIKGF.

This sequence belongs to the Ca(2+):cation antiporter (CaCA) (TC 2.A.19) family. SLC8 subfamily. Detected in heart, brain cortex and hippocampus (at protein level). Cardiac sarcolemma or brain, and spleen. Expressed in all regions of the kidney, highest levels of expression in the distal convoluted tubule. Expressed throughout the CNS, in decreasing order of abundance in hippocampus, cortex, cerebellum, hypothalamus, midbrain and striatum. Expressed in numerous regions of the brain including multiple cortical layers, hippocampus, septal nuclei, thalamic nuclei, cerebellum, hypothalamus, olfactory bulb and brainstem. Also expressed in various regions of the spinal cord, ventricles and atria of the heart, lung, adrenals and kidney. Isoform 4 seems to be a predominant isoform in aorta, stomach, liver, and kidney.

It is found in the cell membrane. The protein resides in the cell projection. The protein localises to the dendrite. It catalyses the reaction Ca(2+)(in) + 3 Na(+)(out) = Ca(2+)(out) + 3 Na(+)(in). With respect to regulation, activated by micromolar levels of Ca(2+). Its activity is regulated as follows. Only active at low calcium concentrations. Not activated by PKC. Active at all calcium levels tested. Activated by PKC. With respect to regulation, only active at low calcium concentrations. Activated by PKC. In terms of biological role, mediates the exchange of one Ca(2+) ion against three to four Na(+) ions across the cell membrane, and thereby contributes to the regulation of cytoplasmic Ca(2+) levels and Ca(2+)-dependent cellular processes. Contributes to Ca(2+) transport during excitation-contraction coupling in muscle. In a first phase, voltage-gated channels mediate the rapid increase of cytoplasmic Ca(2+) levels due to release of Ca(2+) stores from the endoplasmic reticulum. SLC8A1 mediates the export of Ca(2+) from the cell during the next phase, so that cytoplasmic Ca(2+) levels rapidly return to baseline. Required for normal embryonic heart development and the onset of heart contractions. The sequence is that of Sodium/calcium exchanger 1 (Slc8a1) from Rattus norvegicus (Rat).